A 402-amino-acid polypeptide reads, in one-letter code: Phosphoglycerate kinase (402 aa).

Substrate-binding positions include 24-26 (DFN), Arg-40, 63-66 (HFGR), Arg-122, and Arg-155. ATP contacts are provided by residues Lys-206, Gly-297, Glu-328, and 357 to 360 (GGDS).

This sequence belongs to the phosphoglycerate kinase family. As to quaternary structure, monomer.

Its subcellular location is the cytoplasm. It catalyses the reaction (2R)-3-phosphoglycerate + ATP = (2R)-3-phospho-glyceroyl phosphate + ADP. Its pathway is carbohydrate degradation; glycolysis; pyruvate from D-glyceraldehyde 3-phosphate: step 2/5. This is Phosphoglycerate kinase from Prochlorococcus marinus (strain MIT 9211).